A 255-amino-acid polypeptide reads, in one-letter code: Type III pantothenate kinase (255 aa).

6 to 13 (DVGNTNTV) provides a ligand contact to ATP. Residue 108–111 (GADR) participates in substrate binding. The active-site Proton acceptor is Asp110. Asp130 lines the K(+) pocket. Thr133 is a binding site for ATP. Thr185 contacts substrate.

It belongs to the type III pantothenate kinase family. Homodimer. It depends on NH4(+) as a cofactor. The cofactor is K(+).

The protein resides in the cytoplasm. It catalyses the reaction (R)-pantothenate + ATP = (R)-4'-phosphopantothenate + ADP + H(+). It participates in cofactor biosynthesis; coenzyme A biosynthesis; CoA from (R)-pantothenate: step 1/5. In terms of biological role, catalyzes the phosphorylation of pantothenate (Pan), the first step in CoA biosynthesis. The protein is Type III pantothenate kinase of Hyphomonas neptunium (strain ATCC 15444).